Here is a 551-residue protein sequence, read N- to C-terminus: Probable NADH-ubiquinone oxidoreductase C3A11.07, mitochondrial (551 aa).

The transit peptide at 1-37 (MLFSRSILRGMPKAGIPKSPLALSASRNLRLANSVRF) directs the protein to the mitochondrion. 93-123 (TLVVLGAGWGATSILRTIDTSLFNVIVVSPR) contributes to the FAD binding site. Residue 255 to 291 (VHTVVVGGGPTGMEFAGEMADFIEDDLKSWYPELADD) coordinates NAD(+).

This sequence belongs to the NADH dehydrogenase family.

It localises to the mitochondrion. The catalysed reaction is a quinone + NADH + H(+) = a quinol + NAD(+). The enzyme catalyses a ubiquinone + NADH + H(+) = a ubiquinol + NAD(+). Catalyzes the oxidation of NADH. The polypeptide is Probable NADH-ubiquinone oxidoreductase C3A11.07, mitochondrial (Schizosaccharomyces pombe (strain 972 / ATCC 24843) (Fission yeast)).